A 338-amino-acid polypeptide reads, in one-letter code: Ornithine carbamoyltransferase, catabolic (338 aa).

Residues 58–61 (STRT), Gln85, Arg109, and 136–139 (HPTQ) contribute to the carbamoyl phosphate site. Residues Asn168, Asp232, and 236-237 (SM) each bind L-ornithine. Carbamoyl phosphate contacts are provided by residues 273-274 (CL) and Arg318.

It belongs to the aspartate/ornithine carbamoyltransferase superfamily. OTCase family.

It is found in the cytoplasm. The catalysed reaction is carbamoyl phosphate + L-ornithine = L-citrulline + phosphate + H(+). It participates in amino-acid degradation; L-arginine degradation via ADI pathway; carbamoyl phosphate from L-arginine: step 2/2. In terms of biological role, reversibly catalyzes the transfer of the carbamoyl group from carbamoyl phosphate (CP) to the N(epsilon) atom of ornithine (ORN) to produce L-citrulline. This Streptococcus pneumoniae serotype 4 (strain ATCC BAA-334 / TIGR4) protein is Ornithine carbamoyltransferase, catabolic.